The following is a 192-amino-acid chain: Fe/S biogenesis protein NfuA (192 aa).

[4Fe-4S] cluster contacts are provided by Cys149 and Cys152.

Belongs to the NfuA family. Homodimer. [4Fe-4S] cluster serves as cofactor.

In terms of biological role, involved in iron-sulfur cluster biogenesis. Binds a 4Fe-4S cluster, can transfer this cluster to apoproteins, and thereby intervenes in the maturation of Fe/S proteins. Could also act as a scaffold/chaperone for damaged Fe/S proteins. The sequence is that of Fe/S biogenesis protein NfuA from Shewanella amazonensis (strain ATCC BAA-1098 / SB2B).